Here is a 291-residue protein sequence, read N- to C-terminus: Tyrosine recombinase XerD (291 aa).

A Core-binding (CB) domain is found at 1-82 (MEEGLIDRLL…ACKRLYIWME (82 aa)). Positions 103–285 (NIPTLITEQQ…ANVWLQGVVK (183 aa)) constitute a Tyr recombinase domain. Residues Arg-143, Lys-167, His-237, Arg-240, and His-263 contribute to the active site. The active-site O-(3'-phospho-DNA)-tyrosine intermediate is the Tyr-272.

This sequence belongs to the 'phage' integrase family. XerD subfamily. Forms a cyclic heterotetrameric complex composed of two molecules of XerC and two molecules of XerD.

The protein localises to the cytoplasm. In terms of biological role, site-specific tyrosine recombinase, which acts by catalyzing the cutting and rejoining of the recombining DNA molecules. The XerC-XerD complex is essential to convert dimers of the bacterial chromosome into monomers to permit their segregation at cell division. It also contributes to the segregational stability of plasmids. The chain is Tyrosine recombinase XerD from Neisseria meningitidis serogroup B (strain ATCC BAA-335 / MC58).